The following is a 266-amino-acid chain: uncharacterized protein (266 aa).

The protein belongs to the chlamydial CPn_0087/CT_309/TC_0583 family.

This is an uncharacterized protein from Chlamydia pneumoniae (Chlamydophila pneumoniae).